The sequence spans 384 residues: V-type proton ATPase subunit C (384 aa).

The protein belongs to the V-ATPase C subunit family. V-ATPase is a heteromultimeric enzyme made up of two complexes: the ATP-hydrolytic V1 complex and the proton translocation V0 complex. The V1 complex consists of three catalytic AB heterodimers that form a heterohexamer, three peripheral stalks each consisting of EG heterodimers, one central rotor including subunits D and F, and the regulatory subunits C and H. The proton translocation complex V0 consists of the proton transport subunit a, a ring of proteolipid subunits c9c'', rotary subunit d, subunits e and f, and the accessory subunits vah-19/Ac45 and vah-20/PRR. Interacts with V-type proton ATPase subunits a1 unc-32, a2 vha-5 and a3 vha-6. As to expression, expressed ubiquitously; higher levels are found in gastrointestinal and hypodermal cells, as well as H-shaped excretory cell.

The protein resides in the cytoplasm. It is found in the membrane. Its function is as follows. Subunit of the V1 complex of vacuolar(H+)-ATPase (V-ATPase), a multisubunit enzyme composed of a peripheral complex (V1) that hydrolyzes ATP and a membrane integral complex (V0) that translocates protons. V-ATPase is responsible for acidifying and maintaining the pH of intracellular compartments and in some cell types, is targeted to the plasma membrane, where it is responsible for acidifying the extracellular environment. Subunit C is necessary for the assembly of the catalytic sector of the enzyme and is likely to have a specific function in its catalytic activity. Has roles in embryogenesis and ovulation. The chain is V-type proton ATPase subunit C from Caenorhabditis elegans.